A 21-amino-acid chain; its full sequence is Nigrocin-2GRb (21 aa).

Expressed by the skin glands.

It localises to the secreted. Functionally, antimicrobial peptide active against the Gram-positive bacterium S.aureus (MIC=12.5 uM) and against the Gram-negative bacteria E.coli (MIC=3 uM). Has antifungal activity against C.albicans (MIC=50 uM). Has some hemolytic activity against human erythrocytes (LC(50)=40 uM). In Odorrana grahami (Yunnanfu frog), this protein is Nigrocin-2GRb.